The chain runs to 27 residues: uncharacterized protein (27 aa).

Residues 3-23 (IILWAVLIIFLIGLLVVTGVF) form a helical membrane-spanning segment.

The protein localises to the cell inner membrane. This is an uncharacterized protein from Escherichia coli (strain K12).